A 43-amino-acid chain; its full sequence is uncharacterized protein (43 aa).

Positions 1–22 (MKRKIIAIGIFFRLFIIHIHFS) are cleaved as a signal peptide.

This is an uncharacterized protein from Schizosaccharomyces pombe (strain 972 / ATCC 24843) (Fission yeast).